The primary structure comprises 472 residues: Carboxypeptidase Q (472 aa).

A signal peptide spans 1 to 20 (MRFLFFLFVAVVHLFSLGSG). The propeptide occupies 21–44 (KAIYKSGVSQRTFQEIKEEIANYE). A glycan (N-linked (GlcNAc...) asparagine) is linked at asparagine 61. Histidine 290 and aspartate 302 together coordinate Zn(2+). Glutamate 336 (nucleophile) is an active-site residue. Glutamate 337 lines the Zn(2+) pocket. Asparagine 353 is a glycosylation site (N-linked (GlcNAc...) asparagine). Aspartate 364 lines the Zn(2+) pocket. The N-linked (GlcNAc...) asparagine glycan is linked to asparagine 396. Histidine 434 provides a ligand contact to Zn(2+).

The protein belongs to the peptidase M28 family. Homodimer. The monomeric form is inactive while the homodimer is active. Post-translationally, N-glycosylated. The secreted form is modified by hybrid or complex type oligosaccharide chains.

It localises to the endoplasmic reticulum. Its subcellular location is the golgi apparatus. It is found in the lysosome. The protein localises to the secreted. Its function is as follows. Carboxypeptidase that may play an important role in the hydrolysis of circulating peptides. Catalyzes the hydrolysis of dipeptides with unsubstituted terminals into amino acids. May play a role in the liberation of thyroxine hormone from its thyroglobulin (Tg) precursor. This chain is Carboxypeptidase Q (Cpq), found in Rattus norvegicus (Rat).